The sequence spans 223 residues: Transmembrane protein 114 (223 aa).

The helical transmembrane segment at 7–27 (GLAGAAALTGALSFVLLAAAI) threads the bilayer. N-linked (GlcNAc...) asparagine glycans are attached at residues asparagine 55 and asparagine 89. Transmembrane regions (helical) follow at residues 106 to 126 (FVIL…TGFL), 134 to 154 (LLLL…LAGI), and 189 to 209 (LALG…FLAA).

This sequence belongs to the PMP-22/EMP/MP20 family.

It is found in the cell junction. The protein localises to the tight junction. It localises to the lateral cell membrane. Its subcellular location is the apical cell membrane. This is Transmembrane protein 114 from Homo sapiens (Human).